The chain runs to 337 residues: CMP-N-acetylneuraminate-beta-galactosamide-alpha-2,3-sialyltransferase 1 (337 aa).

Over 1-4 (MRRK) the chain is Cytoplasmic. The helical; Signal-anchor for type II membrane protein transmembrane segment at 5 to 25 (TLKYLTFFLLFIFLTSFVLNY) threads the bilayer. The Lumenal portion of the chain corresponds to 26 to 337 (SNTGVPSAWF…INKIRIFKGR (312 aa)). Disulfide bonds link Cys56–Cys61, Cys58–Cys136, and Cys139–Cys278. N-linked (GlcNAc...) asparagine glycosylation occurs at Asn76. Gln102 is a binding site for substrate. Asn109 is a glycosylation site (N-linked (GlcNAc...) asparagine). Residues Asn144, Asn167, Tyr227, Tyr263, Gly267, Gly287, His296, and His313 each contribute to the substrate site. A glycan (N-linked (GlcNAc...) asparagine) is linked at Asn320.

The protein belongs to the glycosyltransferase 29 family. Post-translationally, the soluble form derives from the membrane form by proteolytic processing. As to expression, highly expressed in submaxillary gland and to a much lesser extent in liver, lung, kidney, heart and brain.

It is found in the golgi apparatus. It localises to the golgi stack membrane. The protein localises to the trans-Golgi network membrane. The protein resides in the secreted. The enzyme catalyses a beta-D-galactosyl-(1-&gt;3)-N-acetyl-alpha-D-galactosaminyl derivative + CMP-N-acetyl-beta-neuraminate = an N-acetyl-alpha-neuraminyl-(2-&gt;3)-beta-D-galactosyl-(1-&gt;3)-N-acetyl-alpha-D-galactosaminyl derivative + CMP + H(+). The catalysed reaction is a ganglioside GM1 (d18:1(4E)) + CMP-N-acetyl-beta-neuraminate = a ganglioside GD1a (d18:1(4E)) + CMP + H(+). It carries out the reaction ganglioside GM1 (d18:1(4E)/18:0) + CMP-N-acetyl-beta-neuraminate = ganglioside GD1a (18:1(4E)/18:0) + CMP + H(+). It catalyses the reaction a ganglioside GA1 + CMP-N-acetyl-beta-neuraminate = a ganglioside GM1b + CMP + H(+). The enzyme catalyses a ganglioside GA1 (d18:1(4E)) + CMP-N-acetyl-beta-neuraminate = a ganglioside GM1b (d18:1(4E)) + CMP + H(+). The catalysed reaction is a ganglioside GD1b + CMP-N-acetyl-beta-neuraminate = a ganglioside GT1b + CMP + H(+). It carries out the reaction a 3-O-[beta-D-galactosyl-(1-&gt;3)-N-acetyl-alpha-D-galactosaminyl]-L-threonyl-[protein] + CMP-N-acetyl-beta-neuraminate = a 3-O-[N-acetyl-alpha-neuraminyl-(2-&gt;3)-beta-D-galactosyl-(1-&gt;3)-N-acetyl-alpha-D-galactosaminyl]-L-threonyl-[protein] + CMP + H(+). It catalyses the reaction a 3-O-[beta-D-galactosyl-(1-&gt;3)-N-acetyl-alpha-D-galactosaminyl]-L-seryl-[protein] + CMP-N-acetyl-beta-neuraminate = 3-O-[N-acetyl-alpha-neuraminyl-(2-&gt;3)-beta-D-galactosyl-(1-&gt;3)-N-acetyl-alpha-D-galactosaminyl]-L-seryl-[protein] + CMP + H(+). Its pathway is protein modification; protein glycosylation. It functions in the pathway glycolipid biosynthesis. Its function is as follows. A beta-galactoside alpha2-&gt;3 sialyltransferase involved in terminal sialylation of glycoproteins and glycolipids. Catalyzes the transfer of sialic acid (N-acetyl-neuraminic acid; Neu5Ac) from the nucleotide sugar donor CMP-Neu5Ac onto acceptor Galbeta-(1-&gt;3)-GalNAc-terminated glycoconjugates through an alpha2-3 linkage. Adds sialic acid to the core 1 O-glycan, Galbeta-(1-&gt;3)-GalNAc-O-Ser/Thr, which is a major structure of mucin-type O-glycans. As part of a homeostatic mechanism that regulates CD8-positive T cell numbers, sialylates core 1 O-glycans of T cell glycoproteins, SPN/CD43 and PTPRC/CD45. Prevents premature apoptosis of thymic CD8-positive T cells prior to peripheral emigration, whereas in the secondary lymphoid organs controls the survival of CD8-positive memory T cells generated following a successful immune response. Transfers sialic acid to asialofetuin, presumably onto Galbeta-(1-&gt;3)-GalNAc-O-Ser. Sialylates GM1a, GA1 and GD1b gangliosides to form GD1a, GM1b and GT1b, respectively. This Mus musculus (Mouse) protein is CMP-N-acetylneuraminate-beta-galactosamide-alpha-2,3-sialyltransferase 1 (St3gal1).